The primary structure comprises 124 residues: Large ribosomal subunit protein bL12 (124 aa).

Belongs to the bacterial ribosomal protein bL12 family. In terms of assembly, homodimer. Part of the ribosomal stalk of the 50S ribosomal subunit. Forms a multimeric L10(L12)X complex, where L10 forms an elongated spine to which 2 to 4 L12 dimers bind in a sequential fashion. Binds GTP-bound translation factors.

Forms part of the ribosomal stalk which helps the ribosome interact with GTP-bound translation factors. Is thus essential for accurate translation. In Cupriavidus necator (strain ATCC 17699 / DSM 428 / KCTC 22496 / NCIMB 10442 / H16 / Stanier 337) (Ralstonia eutropha), this protein is Large ribosomal subunit protein bL12.